Reading from the N-terminus, the 87-residue chain is DNA-directed RNA polymerase subunit omega (87 aa).

This sequence belongs to the RNA polymerase subunit omega family. In terms of assembly, the RNAP catalytic core consists of 2 alpha, 1 beta, 1 beta' and 1 omega subunit. When a sigma factor is associated with the core the holoenzyme is formed, which can initiate transcription.

It carries out the reaction RNA(n) + a ribonucleoside 5'-triphosphate = RNA(n+1) + diphosphate. Promotes RNA polymerase assembly. Latches the N- and C-terminal regions of the beta' subunit thereby facilitating its interaction with the beta and alpha subunits. This is DNA-directed RNA polymerase subunit omega from Pseudomonas savastanoi pv. phaseolicola (strain 1448A / Race 6) (Pseudomonas syringae pv. phaseolicola (strain 1448A / Race 6)).